The following is a 260-amino-acid chain: Acetylglutamate kinase (260 aa).

Residues 46-47, Arg-68, and Asn-160 contribute to the substrate site; that span reads GG.

Belongs to the acetylglutamate kinase family. ArgB subfamily.

It localises to the cytoplasm. The enzyme catalyses N-acetyl-L-glutamate + ATP = N-acetyl-L-glutamyl 5-phosphate + ADP. Its pathway is amino-acid biosynthesis; L-arginine biosynthesis; N(2)-acetyl-L-ornithine from L-glutamate: step 2/4. Functionally, catalyzes the ATP-dependent phosphorylation of N-acetyl-L-glutamate. The protein is Acetylglutamate kinase of Shewanella oneidensis (strain ATCC 700550 / JCM 31522 / CIP 106686 / LMG 19005 / NCIMB 14063 / MR-1).